The following is a 1057-amino-acid chain: MERARRLANRATLKRLLSEAKQNRKTESTSTTTTTPLPFSLSGSSSRYVSSVSNSILRGRGSKPDNNVSRRVGGFLGVGYPSQSRSISVEALKPSDTFPRRHNSATPDEQTKMAESVGFDTLDSLVDATVPKSIRLKEMKFNKFDGGLTEGQMIEHMKDLASKNKVFKSFIGMGYYNTHVPPVILRNIMENPAWYTQYTPYQAEISQGRLESLLNFQTMITDLTGLPMSNASLLDEGTAAAEAMSMCNNIQKGKKKTFIIASNCHPQTIDICQTRADGFELKVVVKDLKDIDYKSGDVCGVLVQYPGTEGEVLDYGEFIKKAHANEVKVVMASDLLALTVLKPPGEFGADIVVGSAQRFGVPMGYGGPHAAFLATSQEYKRMMPGRIIGVSVDSSGKQALRMAMQTREQHIRRDKATSNICTAQALLANMAAMYAVYHGPEGLKAIAQRVHGLAGVFALGLKKLGLEVQDLGFFDTVKVKTSNAKAIADAAIKSEINLRVVDGNTITAAFDETTTLEDVDKLFKVFAGGKPVSFTAASLAPEFQNAIPSGLVRESPYLTHPIFNTYQTEHELLRYIHRLQSKDLSLCHSMIPLGSCTMKLNATTEMMPVTWPSFTDLHPFAPTEQAQGYQEMFNNLGDLLCTITGFDSFSLQPNAGAAGEYAGLMVIRAYHLSRGDHHRNVCIIPASAHGTNPASAAMVGMKIVTIGTDAKGNINIEELKKAAEKHKDNLSAFMVTYPSTHGVYEEGIDDICKIIHDNGGQVYMDGANMNAQVGLTSPGWIGADVCHLNLHKTFCIPHGGGGPGMGPIGVKKHLAPFLPSHPVVPTGGIPAPENPQPLGSISAAPWGSALILPISYTYIAMMGSQGLTDASKIAILNANYMAKRLESYYPVLFRGVNGTVAHEFIIDLRGFKNTAGIEPEDVAKRLMDYGFHGPTMSWPVAGTLMIEPTESESKAELDRFCDALISIRKEIAEVEKGNADVHNNVLKGAPHPPSLLMADAWTKPYSREYAAFPAAWLRGAKFWPTTGRVDNVYGDRNLVCTLLPASQAVEEQAAATA.

Residues M1–S86 constitute a mitochondrion transit peptide. Positions S18 to E27 are enriched in basic and acidic residues. The tract at residues S18–R47 is disordered. Over residues S28 to R47 the composition is skewed to low complexity. The residue at position 792 (K792) is an N6-(pyridoxal phosphate)lysine.

This sequence belongs to the GcvP family. Homodimer. The glycine cleavage system is composed of four proteins: P, T, L and H. The cofactor is pyridoxal 5'-phosphate. As to expression, highly expressed in leaves. Detected in roots and embryos.

It is found in the mitochondrion. It catalyses the reaction N(6)-[(R)-lipoyl]-L-lysyl-[glycine-cleavage complex H protein] + glycine + H(+) = N(6)-[(R)-S(8)-aminomethyldihydrolipoyl]-L-lysyl-[glycine-cleavage complex H protein] + CO2. In terms of biological role, the glycine cleavage system catalyzes the degradation of glycine. The P protein binds the alpha-amino group of glycine through its pyridoxal phosphate cofactor; CO(2) is released and the remaining methylamine moiety is then transferred to the lipoamide cofactor of the H protein. The protein is Glycine dehydrogenase (decarboxylating), mitochondrial (GDCSP) of Pisum sativum (Garden pea).